The following is an 886-amino-acid chain: Coatomer subunit gamma (886 aa).

5 HEAT repeats span residues 66-103, 288-325, 327-359, 360-397, and 472-509; these read VEAT…SSDE, RELT…THPM, VTNC…TGNE, SSVE…KFPL, and SDPS…MVES. The interval 592 to 613 is disordered; that stretch reads SQPLAEKKAQGKKPTGLGAPPA.

It belongs to the COPG family. As to quaternary structure, oligomeric complex that consists of at least the alpha, beta, beta', gamma, delta, epsilon and zeta subunits.

The protein localises to the cytoplasm. The protein resides in the golgi apparatus membrane. Its subcellular location is the cytoplasmic vesicle. It is found in the COPI-coated vesicle membrane. Functionally, the coatomer is a cytosolic protein complex that binds to dilysine motifs and reversibly associates with Golgi non-clathrin-coated vesicles, which further mediate biosynthetic protein transport from the ER, via the Golgi up to the trans Golgi network. Coatomer complex is required for budding from Golgi membranes, and is essential for the retrograde Golgi-to-ER transport of dilysine-tagged proteins. This chain is Coatomer subunit gamma, found in Arabidopsis thaliana (Mouse-ear cress).